Here is a 249-residue protein sequence, read N- to C-terminus: Coat protein (249 aa).

The disordered stretch occupies residues 1-28; sequence MVDSKKTETPQVVDASKKAENSKTSQAG.

Belongs to the potexvirus capsid protein family.

It is found in the virion. Required for genome encapsidation. Forms ribonucleoprotein complexes along with TGB1 helicase and viral RNA. This is Coat protein from Solanum tuberosum (Potato).